The following is a 335-amino-acid chain: Pyridoxal 5'-phosphate synthase subunit PdxS (335 aa).

Aspartate 30 contributes to the D-ribose 5-phosphate binding site. Lysine 87 functions as the Schiff-base intermediate with D-ribose 5-phosphate in the catalytic mechanism. Glycine 159 provides a ligand contact to D-ribose 5-phosphate. Arginine 171 provides a ligand contact to D-glyceraldehyde 3-phosphate. Residues glycine 257 and 278 to 279 (GS) contribute to the D-ribose 5-phosphate site.

The protein belongs to the PdxS/SNZ family. In the presence of PdxT, forms a dodecamer of heterodimers.

It catalyses the reaction aldehydo-D-ribose 5-phosphate + D-glyceraldehyde 3-phosphate + L-glutamine = pyridoxal 5'-phosphate + L-glutamate + phosphate + 3 H2O + H(+). It functions in the pathway cofactor biosynthesis; pyridoxal 5'-phosphate biosynthesis. In terms of biological role, catalyzes the formation of pyridoxal 5'-phosphate from ribose 5-phosphate (RBP), glyceraldehyde 3-phosphate (G3P) and ammonia. The ammonia is provided by the PdxT subunit. Can also use ribulose 5-phosphate and dihydroxyacetone phosphate as substrates, resulting from enzyme-catalyzed isomerization of RBP and G3P, respectively. In Pyrococcus furiosus (strain ATCC 43587 / DSM 3638 / JCM 8422 / Vc1), this protein is Pyridoxal 5'-phosphate synthase subunit PdxS.